Consider the following 234-residue polypeptide: Staphylococcal superantigen-like 5 (234 aa).

The N-terminal stretch at 1–30 (MKMTAIAKASLALGILATGTITSLHQTVNA) is a signal peptide.

Belongs to the staphylococcal/streptococcal toxin family. In terms of assembly, interacts with host SELPLG; this interaction prevents SELPLG-mediated neutrophil rolling. Interacts with host MMP9 (via sialic acid-containing O-glycans); this interaction inhibits MMP9 activity. Interacts with host GP1BA and GP6; these interactions play an important role in platelet binding and activation.

Secreted protein that plays a role in the inhibition of host innate immune system. Modulates the interaction between host SELPLG and P-selectin thereby preventing initial rolling of neutrophils toward the site of infection. Interferes with leukocyte trafficking by inhibiting host metalloproteinase-9/MMP9 activity. Also associates with two different platelet surface receptors GP1A and GP6 leading to platelet activation and aggregation. The protein is Staphylococcal superantigen-like 5 of Staphylococcus aureus (strain NCTC 8325 / PS 47).